The primary structure comprises 421 residues: MDKLLIRGGRSLKGEVLISGAKNATLPELCACLLTSAPVTLTNVPRLQDVATMLKLIRNMGVAAERSDDGRVTVDASALSSPEAPYELVKTMRASVLALGPLLTRFGEATVSLPGGCAIGSRPVDQHIKGLTAMGAEIVVEHGYMIAKLPKGWTRLKGARIATDMVTVTGTENFLMAATLAEGVTILENAAQEPEITDLAEMLIKMGANIEGHGSSRIRIQGVESLHGCTHQVVADRIETGTFMCAVAATGGDVLLKHGRIDHLEAVVEKLRDAGATVARVEGGIRVQSQGRLKSQSFRTTEYPGFPTDMQAQFMALNCISHGTAVVTETIFENRFMHVNEMVRLGANIQIDSKVAVVEGVEKLSGATVMATDLRASASLVIAGLVADGETVVERIYHLDRGYDQMEAKLRGLGADIERIK.

22–23 lines the phosphoenolpyruvate pocket; the sequence is KN. Position 93 (Arg-93) interacts with UDP-N-acetyl-alpha-D-glucosamine. Cys-117 acts as the Proton donor in catalysis. Cys-117 is modified (2-(S-cysteinyl)pyruvic acid O-phosphothioketal). UDP-N-acetyl-alpha-D-glucosamine-binding positions include 122–126, Asp-309, and Ile-331; that span reads RPVDQ.

Belongs to the EPSP synthase family. MurA subfamily.

Its subcellular location is the cytoplasm. It carries out the reaction phosphoenolpyruvate + UDP-N-acetyl-alpha-D-glucosamine = UDP-N-acetyl-3-O-(1-carboxyvinyl)-alpha-D-glucosamine + phosphate. It functions in the pathway cell wall biogenesis; peptidoglycan biosynthesis. Cell wall formation. Adds enolpyruvyl to UDP-N-acetylglucosamine. This is UDP-N-acetylglucosamine 1-carboxyvinyltransferase from Albidiferax ferrireducens (strain ATCC BAA-621 / DSM 15236 / T118) (Rhodoferax ferrireducens).